The following is a 93-amino-acid chain: Large ribosomal subunit protein uL23c (93 aa).

Belongs to the universal ribosomal protein uL23 family. As to quaternary structure, part of the 50S ribosomal subunit.

It is found in the plastid. Its subcellular location is the chloroplast. In terms of biological role, binds to 23S rRNA. The sequence is that of Large ribosomal subunit protein uL23c (rpl23) from Fragaria ananassa (Strawberry).